Consider the following 189-residue polypeptide: Large ribosomal subunit protein eL20 (189 aa).

Belongs to the eukaryotic ribosomal protein eL20 family.

The protein localises to the cytoplasm. The protein is Large ribosomal subunit protein eL20 (RPL18A) of Tetrahymena thermophila.